A 460-amino-acid chain; its full sequence is A-type ATP synthase subunit B (460 aa).

It belongs to the ATPase alpha/beta chains family. In terms of assembly, has multiple subunits with at least A(3), B(3), C, D, E, F, H, I and proteolipid K(x).

The protein localises to the cell membrane. Component of the A-type ATP synthase that produces ATP from ADP in the presence of a proton gradient across the membrane. The B chain is a regulatory subunit. In Thermoplasma volcanium (strain ATCC 51530 / DSM 4299 / JCM 9571 / NBRC 15438 / GSS1), this protein is A-type ATP synthase subunit B.